A 338-amino-acid chain; its full sequence is Aspartate-semialdehyde dehydrogenase (338 aa).

Residues 13–16 and 41–42 contribute to the NADP(+) site; these read SGAV and RS. Arg-101 provides a ligand contact to phosphate. Cys-132 functions as the Acyl-thioester intermediate in the catalytic mechanism. Gln-159 serves as a coordination point for substrate. NADP(+) contacts are provided by residues 162–163 and Pro-187; that span reads SG. Lys-216 contacts phosphate. Arg-238 provides a ligand contact to substrate. His-245 acts as the Proton acceptor in catalysis. Asn-317 contributes to the NADP(+) binding site.

Belongs to the aspartate-semialdehyde dehydrogenase family. As to quaternary structure, homodimer.

The enzyme catalyses L-aspartate 4-semialdehyde + phosphate + NADP(+) = 4-phospho-L-aspartate + NADPH + H(+). It participates in amino-acid biosynthesis; L-lysine biosynthesis via DAP pathway; (S)-tetrahydrodipicolinate from L-aspartate: step 2/4. The protein operates within amino-acid biosynthesis; L-methionine biosynthesis via de novo pathway; L-homoserine from L-aspartate: step 2/3. Its pathway is amino-acid biosynthesis; L-threonine biosynthesis; L-threonine from L-aspartate: step 2/5. Its function is as follows. Catalyzes the NADPH-dependent formation of L-aspartate-semialdehyde (L-ASA) by the reductive dephosphorylation of L-aspartyl-4-phosphate. This Shewanella sp. (strain DB6705) protein is Aspartate-semialdehyde dehydrogenase.